The sequence spans 1049 residues: RTX-III toxin determinant A from serotype 2 (1049 aa).

3 helical membrane-spanning segments follow: residues 154-170 (TIISGIQSVLGTVLAGI), 315-331 (ALIASSISLAISPLAFL), and 397-413 (LVGAPITLLVTGITGLI). 6 Hemolysin-type calcium-binding repeats span residues 743–760 (KGSKFRDIFHGADGDDLL), 761–778 (NGNDGDDILYGDKGNDEL), 779–796 (RGDNGNDQLYGGEGDDKL), 797–814 (LGGNGNNYLSGGDGNDEL), 825–842 (RGGKGDDKLYGSSGSDLL), and 843–860 (DGGEGNDYLEGGDGSDFY).

This sequence belongs to the RTX prokaryotic toxin (TC 1.C.11) family. Post-translationally, palmitoylated by ApxIIIC. The toxin only becomes active when modified.

It is found in the secreted. The protein localises to the host cell membrane. Functionally, does not have hemolytic activity but shows a strong cytotoxicity towards alveolar macrophages and neutrophils. The sequence is that of RTX-III toxin determinant A from serotype 2 (apxIIIA) from Actinobacillus pleuropneumoniae (Haemophilus pleuropneumoniae).